Consider the following 365-residue polypeptide: Aminomethyltransferase (365 aa).

Belongs to the GcvT family. The glycine cleavage system is composed of four proteins: P, T, L and H.

It carries out the reaction N(6)-[(R)-S(8)-aminomethyldihydrolipoyl]-L-lysyl-[protein] + (6S)-5,6,7,8-tetrahydrofolate = N(6)-[(R)-dihydrolipoyl]-L-lysyl-[protein] + (6R)-5,10-methylene-5,6,7,8-tetrahydrofolate + NH4(+). Functionally, the glycine cleavage system catalyzes the degradation of glycine. This is Aminomethyltransferase from Chlorobium phaeovibrioides (strain DSM 265 / 1930) (Prosthecochloris vibrioformis (strain DSM 265)).